A 429-amino-acid polypeptide reads, in one-letter code: Adenylosuccinate synthetase (429 aa).

Residues 12–18 and 40–42 contribute to the GTP site; these read GDEGKGK and GHT. The active-site Proton acceptor is Asp-13. Mg(2+) contacts are provided by Asp-13 and Gly-40. Residues 13 to 16, 38 to 41, Thr-129, Arg-143, Gln-223, Thr-238, and Arg-302 contribute to the IMP site; these read DEGK and NAGH. Catalysis depends on His-41, which acts as the Proton donor. Residue 298–304 participates in substrate binding; sequence VVTGRKR. GTP is bound by residues Arg-304, 330–332, and 412–414; these read KLD and STS.

This sequence belongs to the adenylosuccinate synthetase family. In terms of assembly, homodimer. Requires Mg(2+) as cofactor.

The protein localises to the cytoplasm. It catalyses the reaction IMP + L-aspartate + GTP = N(6)-(1,2-dicarboxyethyl)-AMP + GDP + phosphate + 2 H(+). Its pathway is purine metabolism; AMP biosynthesis via de novo pathway; AMP from IMP: step 1/2. Functionally, plays an important role in the de novo pathway of purine nucleotide biosynthesis. Catalyzes the first committed step in the biosynthesis of AMP from IMP. The chain is Adenylosuccinate synthetase from Maricaulis maris (strain MCS10) (Caulobacter maris).